Here is a 225-residue protein sequence, read N- to C-terminus: MHLAEGVLPLGWCAFWNALALPFVAIALHLLRRRTEQDAFYKPFVGLIAAAVFAISCMPVPVPTAGTCSHPCGTGLAAVLIGPWMTVLVTVVALLIQALFLAHGGLTTLGADVASMGIAGAFTGYFAFHLARRSGANLWVAGFLAGVTSDWATYATTALALALGLSGEGSVTSMFTGVALAFVPTQLPLGLLEGVMTAGALAFLRARRPDILDRLQVVRLAPGAS.

A run of 6 helical transmembrane segments spans residues Val-7 to Ala-27, Pro-43 to Pro-63, Leu-76 to Ile-96, Thr-108 to Phe-128, Phe-143 to Leu-163, and Phe-175 to Val-195.

This sequence belongs to the CbiM family. As to quaternary structure, forms an energy-coupling factor (ECF) transporter complex composed of an ATP-binding protein (A component, CbiO), a transmembrane protein (T component, CbiQ) and 2 possible substrate-capture proteins (S components, CbiM and CbiN) of unknown stoichimetry.

It localises to the cell inner membrane. The protein operates within cofactor biosynthesis; adenosylcobalamin biosynthesis. Functionally, part of the energy-coupling factor (ECF) transporter complex CbiMNOQ involved in cobalt import. In Sorangium cellulosum (strain So ce56) (Polyangium cellulosum (strain So ce56)), this protein is Cobalt transport protein CbiM.